The sequence spans 260 residues: Sodium channel modifier 1 (260 aa).

Residues Lys4 to Arg20 carry the Bipartite nuclear localization signal motif. Residues Tyr42 to Arg74 form a Matrin-type zinc finger. The tract at residues Arg143–Ser260 is disordered. Residues Pro166 to Thr187 show a composition bias toward polar residues. Residues Lys202–Glu221 show a composition bias toward basic and acidic residues. The span at Val245–Pro254 shows a compositional bias: acidic residues.

Component of the minor spliceosome, which splices U12-type introns.

It is found in the nucleus. The protein resides in the nucleoplasm. It localises to the nucleus speckle. As a component of the minor spliceosome, involved in the splicing of U12-type introns in pre-mRNAs. This chain is Sodium channel modifier 1 (scnm1), found in Xenopus laevis (African clawed frog).